The sequence spans 282 residues: Pantothenate synthetase (282 aa).

ATP is bound at residue 29 to 36; sequence MGFLHEGH. His-36 serves as the catalytic Proton donor. Position 60 (Gln-60) interacts with (R)-pantoate. Gln-60 serves as a coordination point for beta-alanine. Residue 146–149 coordinates ATP; sequence GEKD. Gln-152 contributes to the (R)-pantoate binding site. ATP-binding positions include Ile-175 and 183–186; that span reads KSSR.

This sequence belongs to the pantothenate synthetase family. Homodimer.

It is found in the cytoplasm. The catalysed reaction is (R)-pantoate + beta-alanine + ATP = (R)-pantothenate + AMP + diphosphate + H(+). Its pathway is cofactor biosynthesis; (R)-pantothenate biosynthesis; (R)-pantothenate from (R)-pantoate and beta-alanine: step 1/1. Its function is as follows. Catalyzes the condensation of pantoate with beta-alanine in an ATP-dependent reaction via a pantoyl-adenylate intermediate. The polypeptide is Pantothenate synthetase (Clostridioides difficile (strain 630) (Peptoclostridium difficile)).